An 819-amino-acid polypeptide reads, in one-letter code: Leucine--tRNA ligase (819 aa).

The 'HIGH' region motif lies at 40 to 51 (PYPSGAGLHVGH). The short motif at 600–604 (KMSKS) is the 'KMSKS' region element. Residue Lys-603 coordinates ATP.

It belongs to the class-I aminoacyl-tRNA synthetase family.

It is found in the cytoplasm. It catalyses the reaction tRNA(Leu) + L-leucine + ATP = L-leucyl-tRNA(Leu) + AMP + diphosphate. The protein is Leucine--tRNA ligase of Chlamydia trachomatis serovar L2 (strain ATCC VR-902B / DSM 19102 / 434/Bu).